An 870-amino-acid polypeptide reads, in one-letter code: Patatin-like phospholipase domain-containing protein NCU11180 (870 aa).

Disordered stretches follow at residues 1-24 (MADD…PPEA) and 131-158 (KVIK…KGVA). Residues 131–141 (KVIKTDRDEKR) show a composition bias toward basic and acidic residues. Over residues 142–155 (NKRGKDRKNKKPRK) the composition is skewed to basic residues. The helical transmembrane segment at 183 to 203 (WPFLLFVSFWIVGLGMAYLAT) threads the bilayer. Positions 281–320 (EEVERELESQSQNSDSGVASGEETSNTKAGGGNNGNDKKT) are disordered. The span at 289 to 308 (SQSQNSDSGVASGEETSNTK) shows a compositional bias: polar residues. The PNPLA domain occupies 399–590 (LCLSGGATFA…RTDIPIKSLN (192 aa)). Residues 430–434 (GTSGG) carry the GXSXG motif. The active-site Nucleophile is the Ser-432. The active-site Proton acceptor is the Asp-577. Disordered stretches follow at residues 735–786 (RRET…DRRG) and 804–870 (GREG…HSRT). A compositionally biased stretch (acidic residues) spans 818-834 (TEDELTMTELEGEDDDG).

This sequence belongs to the PLPL family.

It is found in the membrane. Probable lipid hydrolase. In Neurospora crassa (strain ATCC 24698 / 74-OR23-1A / CBS 708.71 / DSM 1257 / FGSC 987), this protein is Patatin-like phospholipase domain-containing protein NCU11180.